We begin with the raw amino-acid sequence, 310 residues long: Beta-ketoacyl-[acyl-carrier-protein] synthase III (310 aa).

Catalysis depends on residues C112 and H235. An ACP-binding region spans residues 236–240; sequence QANIR. Residue N265 is part of the active site.

This sequence belongs to the thiolase-like superfamily. FabH family. In terms of assembly, homodimer.

The protein resides in the cytoplasm. It carries out the reaction malonyl-[ACP] + acetyl-CoA + H(+) = 3-oxobutanoyl-[ACP] + CO2 + CoA. The protein operates within lipid metabolism; fatty acid biosynthesis. In terms of biological role, catalyzes the condensation reaction of fatty acid synthesis by the addition to an acyl acceptor of two carbons from malonyl-ACP. Catalyzes the first condensation reaction which initiates fatty acid synthesis and may therefore play a role in governing the total rate of fatty acid production. Possesses both acetoacetyl-ACP synthase and acetyl transacylase activities. Its substrate specificity determines the biosynthesis of branched-chain and/or straight-chain of fatty acids. This chain is Beta-ketoacyl-[acyl-carrier-protein] synthase III, found in Geobacillus kaustophilus (strain HTA426).